Reading from the N-terminus, the 86-residue chain is UPF0335 protein mll3968 (86 aa).

Belongs to the UPF0335 family.

The chain is UPF0335 protein mll3968 from Mesorhizobium japonicum (strain LMG 29417 / CECT 9101 / MAFF 303099) (Mesorhizobium loti (strain MAFF 303099)).